Here is a 493-residue protein sequence, read N- to C-terminus: Alpha-amylase-related protein (493 aa).

The signal sequence occupies residues 1 to 19; the sequence is MFKFATAVILCLAASSTLA. Gln-20 bears the Pyrrolidone carboxylic acid mark. A disulfide bond links Cys-47 and Cys-103. Positions 117, 168, and 177 each coordinate Ca(2+). The cysteines at positions 156 and 170 are disulfide-linked. Position 205 (Arg-205) interacts with chloride. Residue Asp-207 is the Nucleophile of the active site. A Ca(2+)-binding site is contributed by His-211. Residue Glu-244 is the Proton donor of the active site. Asn-307 and Arg-342 together coordinate chloride. Cystine bridges form between Cys-375-Cys-381, Cys-417-Cys-440, and Cys-447-Cys-459.

It belongs to the glycosyl hydrolase 13 family. In terms of assembly, monomer. Requires Ca(2+) as cofactor. Chloride is required as a cofactor.

It is found in the secreted. It catalyses the reaction Endohydrolysis of (1-&gt;4)-alpha-D-glucosidic linkages in polysaccharides containing three or more (1-&gt;4)-alpha-linked D-glucose units.. This Drosophila ananassae (Fruit fly) protein is Alpha-amylase-related protein (Amyrel).